The primary structure comprises 149 residues: UPF0179 protein MM_0589 (149 aa).

It belongs to the UPF0179 family.

The sequence is that of UPF0179 protein MM_0589 from Methanosarcina mazei (strain ATCC BAA-159 / DSM 3647 / Goe1 / Go1 / JCM 11833 / OCM 88) (Methanosarcina frisia).